The chain runs to 1039 residues: RNA-binding protein Unr (1039 aa).

Over residues 49 to 62 (TTLGLQPQGQGPSP) the composition is skewed to polar residues. Disordered stretches follow at residues 49 to 126 (TTLG…QQQH) and 165 to 184 (SIFGSQSSNSSAAAADPSQT). 3 stretches are compositionally biased toward low complexity: residues 63 to 80 (QQQQHQQQQQQQQQQHQQ), 89 to 126 (QQHMQQQQQQQQHQQQHQQQQHQQQQQHQQQQQQQQQH), and 165 to 182 (SIFGSQSSNSSAAAADPS). One can recognise a CSD 1 domain in the interval 186–250 (RETGIIEKLL…GKPIASQVSK (65 aa)). Residues 261–337 (RVTGTVTTEL…GNLGACHIRL (77 aa)) form the CSD 2; degenerate domain. In terms of domain architecture, CSD 3 spans 345-413 (KYRGVVCSMK…GREFACNITR (69 aa)). The CSD 4; degenerate domain occupies 428–503 (VYKGQVLKSL…RDQLQRATSI (76 aa)). A CSD 5 domain is found at 517–585 (REQGTIASLK…SRLQAIRIKH (69 aa)). Positions 593 to 673 (FETLVASNIE…KECIAVNVQQ (81 aa)) constitute a CSD 6; degenerate domain. The segment at 721-741 (QNGYVMHGSPGGSTSSVGSNN) is disordered. Over residues 732-741 (GSTSSVGSNN) the composition is skewed to low complexity. The CSD 7 domain occupies 763-831 (VYRGFIAVMK…NCLPAENVRM (69 aa)). Residues 846 to 919 (THNGVVARPL…SGRAACVNAV (74 aa)) enclose the CSD 8; degenerate domain. The 66-residue stretch at 922–987 (KKRATVDSIK…GKSSACNVLK (66 aa)) folds into the CSD 9 domain.

Belongs to the UNR family. In terms of assembly, interacts with Sxl; cooperates with Sxl to prevent translation of msl-2 transcripts. Interacts with mle; promoting association between mle and roX2 non-coding RNA. Interacts (via CSD domain 7-9) with pAbp; promoting translation inhibition of msl-2 transcripts.

Its subcellular location is the cytoplasm. Functionally, RNA-binding protein that acts as a regulator of dosage compensation in both males and females. In males, acts as positive regulator of dosage compensation by promoting assembly of the MSL complex, a multiprotein complex that mediates X-chromosome dosage compensation. Promotes MSL complex assembly via association with roX1 and roX2 non-coding RNA components of the MSL complex, facilitating the interaction between non-coding RNAs and mle. In females, acts as an inhibitor of dosage compensation together with Sxl by preventing production of msl-2 protein, an essential component of the MSL complex. Specifically binds to the 3'-UTR of msl-2 transcripts, and cooperates with Sxl to prevent translation initiation of msl-2 transcripts. Mechanistically, Sxl and Unr inhibit translation initiation by preventing ribosome recruitment after pAbp-mediated recruitment of the eIF4F complex. The protein is RNA-binding protein Unr of Drosophila melanogaster (Fruit fly).